The following is a 112-amino-acid chain: Hydrogenase maturation factor HypA (112 aa).

A Ni(2+)-binding site is contributed by His2. Positions 72, 75, 88, and 91 each coordinate Zn(2+).

Belongs to the HypA/HybF family.

Its function is as follows. Involved in the maturation of [NiFe] hydrogenases. Required for nickel insertion into the metal center of the hydrogenase. The protein is Hydrogenase maturation factor HypA of Francisella philomiragia subsp. philomiragia (strain ATCC 25017 / CCUG 19701 / FSC 153 / O#319-036).